An 81-amino-acid chain; its full sequence is uncharacterized protein (81 aa).

This is an uncharacterized protein from Dictyostelium discoideum (Social amoeba).